A 362-amino-acid polypeptide reads, in one-letter code: Heat-inducible transcription repressor HrcA (362 aa).

It belongs to the HrcA family.

Negative regulator of class I heat shock genes (grpE-dnaK-dnaJ and groELS operons). Prevents heat-shock induction of these operons. The protein is Heat-inducible transcription repressor HrcA of Rhizobium leguminosarum bv. trifolii (strain WSM2304).